The primary structure comprises 523 residues: Sensory neuron membrane protein 1 (523 aa).

At 1 to 11 (MQLPRELKYAA) the chain is on the cytoplasmic side. Residues 12 to 32 (IAGGVALFGLIFGWVLFPTIL) traverse the membrane as a helical segment. Over 33–458 (KSQLKKEMAL…HQLFIPKRVV (426 aa)) the chain is Extracellular. An N-linked (GlcNAc...) asparagine glycan is attached at N229. 3 cysteine pairs are disulfide-bonded: C268–C333, C297–C352, and C335–C341. N440 carries N-linked (GlcNAc...) asparagine glycosylation. Residues 459 to 479 (GVLRWWMVSFGSLGAVIGIVF) form a helical membrane-spanning segment. At 480 to 523 (HFRDHIMRLAVSGDTKVSKVIPEVEEQKDISVIGQAQEPAKVNI) the chain is on the cytoplasmic side.

The protein belongs to the CD36 family.

It localises to the cell membrane. Its function is as follows. Plays an olfactory role that is not restricted to pheromone sensitivity. This chain is Sensory neuron membrane protein 1, found in Helicoverpa assulta (Oriental tobacco budworm).